The primary structure comprises 752 residues: Coiled-coil domain-containing protein 157 (752 aa).

Residues 135–154 (QQPLPQKGANQRETPTSKPT) show a composition bias toward polar residues. Disordered regions lie at residues 135-163 (QQPLPQKGANQRETPTSKPTTKGEPARSP) and 316-336 (QALKQEQGARRRQAEEDEQCL). Coiled-coil stretches lie at residues 276–544 (AAEQ…LLVA) and 579–615 (DHMERQVQSNDIRIRVLQEENGRLQSMLSKIREVAQQ). Positions 316–329 (QALKQEQGARRRQA) are enriched in basic and acidic residues. Disordered regions lie at residues 620–707 (LIPQ…QPSK) and 731–752 (RKRLSPGRGQASSAHQPQERPM). A compositionally biased stretch (polar residues) spans 628–648 (SPSSKGTQGATPPVQAKSTSP). The segment covering 671–692 (TSPPRQPCTSPPRQPCTSPPRQ) has biased composition (pro residues). A compositionally biased stretch (polar residues) spans 693–707 (PCTSPSRQPCSQPSK).

The chain is Coiled-coil domain-containing protein 157 (CCDC157) from Homo sapiens (Human).